The sequence spans 122 residues: MAAPVDLELKKAFAELQAKMVDTQQKVKLADLQIEQLSRVKKHANLTHGEITSLPESTRMFEGAGRMFILQSKGEISNQLLEKQKTADDKIKELEQKKTYLERSVKDAEDNIREMLMSRRAQ.

This sequence belongs to the prefoldin subunit beta family. As to quaternary structure, heterohexamer of two PFD-alpha type and four PFD-beta type subunits.

In terms of biological role, binds specifically to cytosolic chaperonin (c-CPN) and transfers target proteins to it. Binds to nascent polypeptide chain and promotes folding in an environment in which there are many competing pathways for nonnative proteins. The polypeptide is Prefoldin subunit 1 (pfdn1) (Danio rerio (Zebrafish)).